A 91-amino-acid polypeptide reads, in one-letter code: Small ribosomal subunit protein uS19 (91 aa).

The protein belongs to the universal ribosomal protein uS19 family.

Protein S19 forms a complex with S13 that binds strongly to the 16S ribosomal RNA. The sequence is that of Small ribosomal subunit protein uS19 from Halorhodospira halophila (strain DSM 244 / SL1) (Ectothiorhodospira halophila (strain DSM 244 / SL1)).